We begin with the raw amino-acid sequence, 258 residues long: Tryptophan synthase alpha chain (258 aa).

Active-site proton acceptor residues include Glu44 and Asp55.

This sequence belongs to the TrpA family. In terms of assembly, tetramer of two alpha and two beta chains.

The enzyme catalyses (1S,2R)-1-C-(indol-3-yl)glycerol 3-phosphate + L-serine = D-glyceraldehyde 3-phosphate + L-tryptophan + H2O. It participates in amino-acid biosynthesis; L-tryptophan biosynthesis; L-tryptophan from chorismate: step 5/5. Its function is as follows. The alpha subunit is responsible for the aldol cleavage of indoleglycerol phosphate to indole and glyceraldehyde 3-phosphate. The polypeptide is Tryptophan synthase alpha chain (Petrotoga mobilis (strain DSM 10674 / SJ95)).